We begin with the raw amino-acid sequence, 250 residues long: 1-(5-phosphoribosyl)-5-[(5-phosphoribosylamino)methylideneamino] imidazole-4-carboxamide isomerase (250 aa).

Catalysis depends on aspartate 12, which acts as the Proton acceptor. Aspartate 133 serves as the catalytic Proton donor.

This sequence belongs to the HisA/HisF family.

It localises to the cytoplasm. The catalysed reaction is 1-(5-phospho-beta-D-ribosyl)-5-[(5-phospho-beta-D-ribosylamino)methylideneamino]imidazole-4-carboxamide = 5-[(5-phospho-1-deoxy-D-ribulos-1-ylimino)methylamino]-1-(5-phospho-beta-D-ribosyl)imidazole-4-carboxamide. It participates in amino-acid biosynthesis; L-histidine biosynthesis; L-histidine from 5-phospho-alpha-D-ribose 1-diphosphate: step 4/9. The sequence is that of 1-(5-phosphoribosyl)-5-[(5-phosphoribosylamino)methylideneamino] imidazole-4-carboxamide isomerase from Zymomonas mobilis subsp. mobilis (strain ATCC 31821 / ZM4 / CP4).